We begin with the raw amino-acid sequence, 714 residues long: Developmentally-regulated protein kinase 1 (714 aa).

Disordered stretches follow at residues 88 to 122 (NNNI…NNFN) and 174 to 266 (CNMI…IINN). Low complexity-rich tracts occupy residues 174 to 200 (CNMI…NNNN), 209 to 227 (PSSN…TTSS), and 240 to 266 (NFNQ…IINN). One can recognise a Protein kinase domain in the interval 334-589 (FNFYGSLGSG…SCSIRNHKWF (256 aa)). ATP-binding positions include 340-348 (LGSGSFGTA) and lysine 363. Aspartate 457 (proton acceptor) is an active-site residue. At threonine 488 the chain carries Phosphothreonine.

This sequence belongs to the protein kinase superfamily. AGC Ser/Thr protein kinase family.

It catalyses the reaction L-seryl-[protein] + ATP = O-phospho-L-seryl-[protein] + ADP + H(+). The enzyme catalyses L-threonyl-[protein] + ATP = O-phospho-L-threonyl-[protein] + ADP + H(+). This chain is Developmentally-regulated protein kinase 1 (pkaD), found in Dictyostelium discoideum (Social amoeba).